A 582-amino-acid polypeptide reads, in one-letter code: Leucine-rich repeat protein SHOC-2 (582 aa).

Composition is skewed to basic and acidic residues over residues 1–29 (MSSS…KEAK) and 36–57 (KESK…KKDS). The disordered stretch occupies residues 1 to 88 (MSSSLGKEKD…PGTRKKSSNA (88 aa)). Residues 63–66 (GVAF) carry the RVxF motif; important for interaction with PP1c motif. LRR repeat units follow at residues 101–122 (NSMR…IKEL), 124–145 (QLTE…VGCL), 147–169 (NLMT…DNLK), 170–191 (KLRM…VYRL), 193–214 (SLTT…IKNL), 216–237 (KLSM…IGEL), 239–260 (NLIT…IGNC), 262–283 (QITN…IGNL), 285–307 (SLSR…AKCS), 308–329 (ALEE…LLSS), 332–353 (KLNS…GPSQ), 356–377 (TIYS…IFSR), 380–400 (VLSK…DFGT), 403–424 (SMVE…VSGL), 426–448 (SLEV…GNLR), 449–470 (KLRE…IAYL), 472–494 (DLQK…GHLT), 495–516 (NLTH…IGTL), 518–540 (NLEE…LALC), and 542–563 (KLSI…IVAG).

Belongs to the SHOC2 family. As to quaternary structure, component of the SHOC2-MRAS-PP1c (SMP) complex consisting of SHOC2, GTP-bound M-Ras/MRAS and the catalytic subunit of protein phosphatase 1 (either PPP1CA, PPP1CB or PPP1CC). SHOC2 and PP1c preferably bind M-Ras/MRAS, but they also bind K-Ras/KRAS, N-Ras/NRAS and H-Ras/HRAS; these interactions are GTP-dependent and both SHOC2 and PP1c are required to form a stable complex. Interacts with PP1c in the absence of Ras GTPases. Interacts with M-Ras/MRAS and RAF1. Interacts with ERBIN; disrupts the interaction with RAF1 and Ras, preventing the activation of the Ras signaling pathway. Interacts with LZTR1.

Its subcellular location is the cytoplasm. It localises to the nucleus. Core component of the SHOC2-MRAS-PP1c (SMP) holophosphatase complex that regulates activation of the MAPK pathway. Acts as a scaffolding protein in the SMP complex. The SMP complex specifically dephosphorylates the inhibitory phosphorylation at 'Ser-259' of RAF1 kinase, 'Ser-365' of BRAF kinase and 'Ser-214' of ARAF kinase, stimulating their kinase activities. The SMP complex enhances the dephosphorylation activity and substrate specificity of PP1c. This Homo sapiens (Human) protein is Leucine-rich repeat protein SHOC-2 (SHOC2).